Reading from the N-terminus, the 291-residue chain is Tyrosine recombinase XerD (291 aa).

The region spanning 1-82 (MEEGLIDRLL…ACKRLYIWME (82 aa)) is the Core-binding (CB) domain. The 183-residue stretch at 103–285 (NIPTLITEQQ…ANVWLQGVVK (183 aa)) folds into the Tyr recombinase domain. Active-site residues include arginine 143, lysine 167, histidine 237, arginine 240, and histidine 263. The O-(3'-phospho-DNA)-tyrosine intermediate role is filled by tyrosine 272.

The protein belongs to the 'phage' integrase family. XerD subfamily. As to quaternary structure, forms a cyclic heterotetrameric complex composed of two molecules of XerC and two molecules of XerD.

The protein localises to the cytoplasm. In terms of biological role, site-specific tyrosine recombinase, which acts by catalyzing the cutting and rejoining of the recombining DNA molecules. The XerC-XerD complex is essential to convert dimers of the bacterial chromosome into monomers to permit their segregation at cell division. It also contributes to the segregational stability of plasmids. The protein is Tyrosine recombinase XerD of Neisseria meningitidis serogroup A / serotype 4A (strain DSM 15465 / Z2491).